The sequence spans 202 residues: Ion-translocating oxidoreductase complex subunit G (202 aa).

A helical membrane pass occupies residues 11–31 (ACLMGFFSFFSLSSVIFVKNI). At T176 the chain carries FMN phosphoryl threonine.

Belongs to the RnfG family. In terms of assembly, the complex is composed of six subunits: RnfA, RnfB, RnfC, RnfD, RnfE and RnfG. FMN is required as a cofactor.

It localises to the cell inner membrane. Part of a membrane-bound complex that couples electron transfer with translocation of ions across the membrane. This is Ion-translocating oxidoreductase complex subunit G from Buchnera aphidicola subsp. Schizaphis graminum (strain Sg).